The following is a 742-amino-acid chain: Catalase-peroxidase (742 aa).

A disordered region spans residues 1-43 (MSDSCPVAHEGNTQSTSESENPVIPSPTPAANRPRNNRDWWPN). Residues 11-20 (GNTQSTSESE) show a composition bias toward polar residues. The segment at residues 109–231 (WHAAGTYRIA…LGAVQMGLIY (123 aa)) is a cross-link (tryptophyl-tyrosyl-methioninium (Trp-Tyr) (with M-257)). Histidine 110 serves as the catalytic Proton acceptor. Residues 231–257 (YVNPEGPNGQPDPLAAARDIRETFSRM) constitute a cross-link (tryptophyl-tyrosyl-methioninium (Tyr-Met) (with W-109)). Histidine 272 contributes to the heme b binding site.

The protein belongs to the peroxidase family. Peroxidase/catalase subfamily. In terms of assembly, homodimer or homotetramer. It depends on heme b as a cofactor. In terms of processing, formation of the three residue Trp-Tyr-Met cross-link is important for the catalase, but not the peroxidase activity of the enzyme.

The catalysed reaction is H2O2 + AH2 = A + 2 H2O. It carries out the reaction 2 H2O2 = O2 + 2 H2O. In terms of biological role, bifunctional enzyme with both catalase and broad-spectrum peroxidase activity. This is Catalase-peroxidase from Rhodococcus jostii (strain RHA1).